The primary structure comprises 1375 residues: DNA-directed RNA polymerase subunit beta (1375 aa).

Belongs to the RNA polymerase beta chain family. In terms of assembly, the RNAP catalytic core consists of 2 alpha, 1 beta, 1 beta' and 1 omega subunit. When a sigma factor is associated with the core the holoenzyme is formed, which can initiate transcription.

It carries out the reaction RNA(n) + a ribonucleoside 5'-triphosphate = RNA(n+1) + diphosphate. DNA-dependent RNA polymerase catalyzes the transcription of DNA into RNA using the four ribonucleoside triphosphates as substrates. This chain is DNA-directed RNA polymerase subunit beta, found in Malacoplasma penetrans (strain HF-2) (Mycoplasma penetrans).